The primary structure comprises 267 residues: MHLLLFQLLVLLPLGKTTRHQDGRQNQSSLSPVLLPRNQRELPTGNHEEAEEKPDLFVAVPHLVATSPAGEGQRQREKMLSRFGRFWKKPEREMHPSRDSDSEPFPPGTQSLIQPIDGMKMEKSPLREEAKKFWHHFMFRKTPASQGVILPIKSHEVHWETCRTVPFSQTITHEGCEKVVVQNNLCFGKCGSVHFPGAAQHSHTSCSHCLPAKFTTMHLPLNCTELSSVIKVVMLVEECQCKVKTEHEDGHILHAGSQDSFIPGVSA.

The first 17 residues, 1-17 (MHLLLFQLLVLLPLGKT), serve as a signal peptide directing secretion. Disordered stretches follow at residues 19–52 (RHQD…EAEE) and 87–113 (WKKP…QSLI). An N-linked (GlcNAc...) asparagine glycan is attached at asparagine 26. The span at 88-101 (KKPEREMHPSRDSD) shows a compositional bias: basic and acidic residues. Disulfide bonds link cysteine 162–cysteine 209, cysteine 176–cysteine 223, cysteine 186–cysteine 239, and cysteine 190–cysteine 241. Residues 162–246 (CRTVPFSQTI…EECQCKVKTE (85 aa)) form the CTCK domain. An N-linked (GlcNAc...) asparagine glycan is attached at asparagine 222.

It belongs to the DAN family. Forms monomers and predominantly dimers. Post-translationally, N-glycosylated.

The protein localises to the secreted. In terms of biological role, cytokine that may play a role in anterior neural induction and somite formation during embryogenesis in part through a BMP-inhibitory mechanism. Can regulate Nodal signaling during gastrulation as well as the formation and patterning of the primitive streak. This chain is Cerberus (CER1), found in Homo sapiens (Human).